Here is a 574-residue protein sequence, read N- to C-terminus: Kelch-like protein 18 (574 aa).

Residues 66 to 105 (MFTNDMMECKQDEIVMQGMDPSALEALINFAYNGNLAIDQ) form the BTB domain. Residues 140–242 (CLGVRQFAET…RPQFLSDRVQ (103 aa)) enclose the BACK domain. 6 Kelch repeats span residues 289-336 (LIYA…VVNG), 337-383 (LLYA…VLDG), 384-430 (QIYV…VFEG), 432-477 (IYVS…SLGS), 479-524 (MFVC…ASCG), and 525-571 (RLYA…CIPL).

Interacts with AURKA. Interacts (via BTB domain) with CUL3. Interacts (via kelch repeats) with UNC119.

Its pathway is protein modification; protein ubiquitination. In terms of biological role, substrate-specific adapter of a BCR (BTB-CUL3-RBX1) E3 ubiquitin-protein ligase complex required for mitotic progression and cytokinesis. The BCR(KLHL18) E3 ubiquitin ligase complex mediates the ubiquitination of AURKA leading to its activation at the centrosome which is required for initiating mitotic entry. Regulates light-and dark-dependent alpha-transducin localization changes in rod photoreceptors through UNC119 ubiquitination and degradation. Preferentially ubiquitinates the unphosphorylated form of UNC119 over the phosphorylated form. In the presence of UNC119, under dark-adapted conditions alpha-transducin mislocalizes from the outer segment to the inner part of rod photoreceptors which leads to decreased photoreceptor damage caused by light. The protein is Kelch-like protein 18 (KLHL18) of Homo sapiens (Human).